The primary structure comprises 306 residues: Hydroxypyruvate reductase (306 aa).

NAD(+) is bound by residues 152–153 (NI), D172, 228–230 (TAR), and D254. The active site involves R230. The active site involves E259. H280 (proton donor) is an active-site residue. 280-283 (HIGA) is an NAD(+) binding site.

Belongs to the D-isomer specific 2-hydroxyacid dehydrogenase family.

The enzyme catalyses (R)-glycerate + NAD(+) = 3-hydroxypyruvate + NADH + H(+). It carries out the reaction (R)-glycerate + NADP(+) = 3-hydroxypyruvate + NADPH + H(+). Functionally, involved in the degradation of L-serine via 3-hydroxypyruvate. Catalyzes the non-reversible reduction of 3-hydroxypyruvate to yield D-glycerate. The protein is Hydroxypyruvate reductase of Thermotoga maritima (strain ATCC 43589 / DSM 3109 / JCM 10099 / NBRC 100826 / MSB8).